The chain runs to 632 residues: Putative ankyrin repeat protein L767 (632 aa).

5 ANK repeats span residues 61–97, 228–250, 251–282, 345–374, and 517–546; these read YGNTFMTNRIIKNTKYSLLDVNTVQMLLDYGDPDYEF, FDNEKLFYTVLYDSFELTKYIVE, KGFYYDFDSVINSDINLEMLKFFIELGNNLTD, NLDILMKTSILRENINMIKKCIEYGINVDD, and NSIELLFVVVLSENIDLFKLLLEINCNDTD.

This is Putative ankyrin repeat protein L767 from Acanthamoeba polyphaga mimivirus (APMV).